Consider the following 282-residue polypeptide: 2-dehydro-3-deoxyphosphooctonate aldolase (282 aa).

This sequence belongs to the KdsA family.

Its subcellular location is the cytoplasm. It catalyses the reaction D-arabinose 5-phosphate + phosphoenolpyruvate + H2O = 3-deoxy-alpha-D-manno-2-octulosonate-8-phosphate + phosphate. Its pathway is carbohydrate biosynthesis; 3-deoxy-D-manno-octulosonate biosynthesis; 3-deoxy-D-manno-octulosonate from D-ribulose 5-phosphate: step 2/3. It functions in the pathway bacterial outer membrane biogenesis; lipopolysaccharide biosynthesis. The chain is 2-dehydro-3-deoxyphosphooctonate aldolase from Shewanella baltica (strain OS185).